Consider the following 150-residue polypeptide: Large ribosomal subunit protein uL15 (150 aa).

Over residues 1-13 the composition is skewed to basic and acidic residues; sequence MADNDAIKVHDLR. The segment at 1 to 44 is disordered; it reads MADNDAIKVHDLRPAPGAKTAKTRVGRGEASKGKTAGRGTKGTK.

It belongs to the universal ribosomal protein uL15 family. In terms of assembly, part of the 50S ribosomal subunit.

In terms of biological role, binds to the 23S rRNA. This Micrococcus luteus (strain ATCC 4698 / DSM 20030 / JCM 1464 / CCM 169 / CCUG 5858 / IAM 1056 / NBRC 3333 / NCIMB 9278 / NCTC 2665 / VKM Ac-2230) (Micrococcus lysodeikticus) protein is Large ribosomal subunit protein uL15.